A 423-amino-acid chain; its full sequence is Histidine--tRNA ligase (423 aa).

This sequence belongs to the class-II aminoacyl-tRNA synthetase family. Homodimer.

It is found in the cytoplasm. It carries out the reaction tRNA(His) + L-histidine + ATP = L-histidyl-tRNA(His) + AMP + diphosphate + H(+). The sequence is that of Histidine--tRNA ligase (hisS) from Mycobacterium bovis (strain ATCC BAA-935 / AF2122/97).